Consider the following 262-residue polypeptide: Acyl-[acyl-carrier-protein]--UDP-N-acetylglucosamine O-acyltransferase (262 aa).

This sequence belongs to the transferase hexapeptide repeat family. LpxA subfamily. Homotrimer.

The protein resides in the cytoplasm. It catalyses the reaction a (3R)-hydroxyacyl-[ACP] + UDP-N-acetyl-alpha-D-glucosamine = a UDP-3-O-[(3R)-3-hydroxyacyl]-N-acetyl-alpha-D-glucosamine + holo-[ACP]. It functions in the pathway glycolipid biosynthesis; lipid IV(A) biosynthesis; lipid IV(A) from (3R)-3-hydroxytetradecanoyl-[acyl-carrier-protein] and UDP-N-acetyl-alpha-D-glucosamine: step 1/6. In terms of biological role, involved in the biosynthesis of lipid A, a phosphorylated glycolipid that anchors the lipopolysaccharide to the outer membrane of the cell. In Salmonella arizonae (strain ATCC BAA-731 / CDC346-86 / RSK2980), this protein is Acyl-[acyl-carrier-protein]--UDP-N-acetylglucosamine O-acyltransferase.